The sequence spans 403 residues: Phosphopentomutase (403 aa).

Mn(2+)-binding residues include D13, D298, H303, D339, H340, and H351.

Belongs to the phosphopentomutase family. It depends on Mn(2+) as a cofactor.

It is found in the cytoplasm. The catalysed reaction is 2-deoxy-alpha-D-ribose 1-phosphate = 2-deoxy-D-ribose 5-phosphate. It catalyses the reaction alpha-D-ribose 1-phosphate = D-ribose 5-phosphate. It participates in carbohydrate degradation; 2-deoxy-D-ribose 1-phosphate degradation; D-glyceraldehyde 3-phosphate and acetaldehyde from 2-deoxy-alpha-D-ribose 1-phosphate: step 1/2. In terms of biological role, isomerase that catalyzes the conversion of deoxy-ribose 1-phosphate (dRib-1-P) and ribose 1-phosphate (Rib-1-P) to deoxy-ribose 5-phosphate (dRib-5-P) and ribose 5-phosphate (Rib-5-P), respectively. This Streptococcus pneumoniae (strain Hungary19A-6) protein is Phosphopentomutase.